The chain runs to 59 residues: UPF0181 protein YoaH (59 aa).

Belongs to the UPF0181 family.

The polypeptide is UPF0181 protein YoaH (Shigella flexneri serotype 5b (strain 8401)).